The primary structure comprises 123 residues: Potassium voltage-gated channel subfamily E member 2 (123 aa).

N-linked (GlcNAc...) asparagine glycosylation is found at Asn6 and Asn29. The helical transmembrane segment at Val49–Val69 threads the bilayer. The Cytoplasmic segment spans residues Ser70–Pro123.

It belongs to the potassium channel KCNE family. In terms of assembly, interacts with KCNB1. Associates with KCNH2/ERG1. May associate with KCNQ2 and KCNQ3. Associates with HCN1 and probably HCN2. Heteromultimer with KCNC2. Interacts with KCNC2. Interacts with KCNQ1; forms a heterooligomer complex that targets to the membrane raft and leading to currents with an apparently instantaneous activation, a rapid deactivation process and a linear current-voltage relationship and decreases the amplitude of the outward current.

Its subcellular location is the cell membrane. It is found in the apical cell membrane. Ancillary protein that functions as a regulatory subunit of the voltage-gated potassium (Kv) channel complex composed of pore-forming and potassium-conducting alpha subunits and of regulatory beta subunits. KCNE2 beta subunit modulates the gating kinetics and enhances stability of the channel complex. Alters the gating of the delayed rectifier Kv channel containing KCNB1 alpha subunit. Associates with KCNH2/HERG alpha subunit Kv channel to form the rapidly activating component of the delayed rectifying potassium current (IKr) in heart. May associate with KCNQ2 and/or KCNQ3 alpha subunits to modulate the native M-type current. May associate with HCN1 and HCN2 channel subunits to increase potassium current. Forms a heterooligomer complex with KCNQ1/KVLQT1 alpha subunits which leads to currents with an apparently instantaneous activation, a rapid deactivation process and a linear current-voltage relationship and decreases the amplitude of the outward current. KCNQ1-KCNE2 channel associates with Na(+)-coupled myo-inositol symporter in the apical membrane of choroid plexus epithelium and regulates the myo-inositol gradient between blood and cerebrospinal fluid with an impact on neuron excitability. The chain is Potassium voltage-gated channel subfamily E member 2 (Kcne2) from Cavia porcellus (Guinea pig).